The primary structure comprises 188 residues: dCTP deaminase (188 aa).

Lys-109–Arg-114 is a dCTP binding site. Glu-135 (proton donor/acceptor) is an active-site residue. Gln-154, Tyr-168, and Gln-178 together coordinate dCTP.

It belongs to the dCTP deaminase family. Homotrimer.

It carries out the reaction dCTP + H2O + H(+) = dUTP + NH4(+). The protein operates within pyrimidine metabolism; dUMP biosynthesis; dUMP from dCTP (dUTP route): step 1/2. Catalyzes the deamination of dCTP to dUTP. This Helicobacter pylori (strain Shi470) protein is dCTP deaminase.